We begin with the raw amino-acid sequence, 367 residues long: Uroporphyrinogen decarboxylase (367 aa).

Residues 28–32, Asp-78, Tyr-158, Thr-213, and His-334 each bind substrate; that span reads RQAGR.

This sequence belongs to the uroporphyrinogen decarboxylase family. As to quaternary structure, homodimer.

It localises to the cytoplasm. The enzyme catalyses uroporphyrinogen III + 4 H(+) = coproporphyrinogen III + 4 CO2. It participates in porphyrin-containing compound metabolism; protoporphyrin-IX biosynthesis; coproporphyrinogen-III from 5-aminolevulinate: step 4/4. Its function is as follows. Catalyzes the decarboxylation of four acetate groups of uroporphyrinogen-III to yield coproporphyrinogen-III. The protein is Uroporphyrinogen decarboxylase of Ralstonia pickettii (strain 12J).